A 264-amino-acid chain; its full sequence is 3-methyl-2-oxobutanoate hydroxymethyltransferase (264 aa).

Positions 45 and 84 each coordinate Mg(2+). 3-methyl-2-oxobutanoate contacts are provided by residues 45-46 (DS), aspartate 84, and lysine 112. Residue glutamate 114 coordinates Mg(2+). The active-site Proton acceptor is the glutamate 181.

This sequence belongs to the PanB family. Homodecamer; pentamer of dimers. Mg(2+) serves as cofactor.

Its subcellular location is the cytoplasm. It carries out the reaction 3-methyl-2-oxobutanoate + (6R)-5,10-methylene-5,6,7,8-tetrahydrofolate + H2O = 2-dehydropantoate + (6S)-5,6,7,8-tetrahydrofolate. It participates in cofactor biosynthesis; (R)-pantothenate biosynthesis; (R)-pantoate from 3-methyl-2-oxobutanoate: step 1/2. Functionally, catalyzes the reversible reaction in which hydroxymethyl group from 5,10-methylenetetrahydrofolate is transferred onto alpha-ketoisovalerate to form ketopantoate. The polypeptide is 3-methyl-2-oxobutanoate hydroxymethyltransferase (Vibrio parahaemolyticus serotype O3:K6 (strain RIMD 2210633)).